The chain runs to 376 residues: Chaperone protein DnaJ (376 aa).

Positions aspartate 5 to glycine 70 constitute a J domain. Residues glycine 134–threonine 212 form a CR-type zinc finger. Zn(2+) is bound by residues cysteine 147, cysteine 150, cysteine 164, cysteine 167, cysteine 186, cysteine 189, cysteine 200, and cysteine 203. CXXCXGXG motif repeat units lie at residues cysteine 147 to glycine 154, cysteine 164 to glycine 171, cysteine 186 to glycine 193, and cysteine 200 to glycine 207.

The protein belongs to the DnaJ family. In terms of assembly, homodimer. Requires Zn(2+) as cofactor.

It is found in the cytoplasm. Functionally, participates actively in the response to hyperosmotic and heat shock by preventing the aggregation of stress-denatured proteins and by disaggregating proteins, also in an autonomous, DnaK-independent fashion. Unfolded proteins bind initially to DnaJ; upon interaction with the DnaJ-bound protein, DnaK hydrolyzes its bound ATP, resulting in the formation of a stable complex. GrpE releases ADP from DnaK; ATP binding to DnaK triggers the release of the substrate protein, thus completing the reaction cycle. Several rounds of ATP-dependent interactions between DnaJ, DnaK and GrpE are required for fully efficient folding. Also involved, together with DnaK and GrpE, in the DNA replication of plasmids through activation of initiation proteins. In Teredinibacter turnerae (strain ATCC 39867 / T7901), this protein is Chaperone protein DnaJ.